The following is a 732-amino-acid chain: Sesterbrasiliatriene synthase PbSS (732 aa).

Residues 1 to 342 (MDFLSGAFHY…SRYHRDDLIT (342 aa)) form a terpene cyclase region. Mg(2+) contacts are provided by aspartate 105 and aspartate 109. Substrate contacts are provided by residues aspartate 105, aspartate 109, 193-196 (RLSE), 242-246 (FNKEF), and 334-335 (RY). The short motif at 105–109 (DDVTD) is the DDXXD 1 element. An NSE/DTE motif is present at residues 238-246 (DYYSFNKEF). Residues 343–732 (TAGDRAMIVG…ARILLLGLGL (390 aa)) are prenyltransferase. 2 disordered regions span residues 371–390 (KSAT…WSDS) and 398–420 (ACYT…HKAN). Basic and acidic residues predominate over residues 411-420 (NGTEAGHKAN). Positions 453, 456, and 485 each coordinate isopentenyl diphosphate. Residues aspartate 492 and aspartate 496 each contribute to the Mg(2+) site. The DDXXD 2 signature appears at 492–496 (DDIED). Arginine 501 lines the dimethylallyl diphosphate pocket. Arginine 502 is a binding site for isopentenyl diphosphate. Dimethylallyl diphosphate-binding residues include lysine 579, threonine 580, glutamine 615, asparagine 622, lysine 632, and lysine 642.

It in the N-terminal section; belongs to the terpene synthase family. This sequence in the C-terminal section; belongs to the FPP/GGPP synthase family. As to quaternary structure, hexamer. Mg(2+) serves as cofactor.

It catalyses the reaction isopentenyl diphosphate + (2E,6E)-farnesyl diphosphate = (2E,6E,10E)-geranylgeranyl diphosphate + diphosphate. The catalysed reaction is isopentenyl diphosphate + (2E,6E,10E)-geranylgeranyl diphosphate = (2E,6E,10E,14E)-geranylfarnesyl diphosphate + diphosphate. Its pathway is secondary metabolite biosynthesis; terpenoid biosynthesis. Functionally, bifunctional sesterterpene synthase that possesses both prenyl transferase and terpene cyclase activity, converting isopentenyl diphosphate and dimethylallyl diphosphate into geranylfarnesyl diphosphate (GFPP) and further converting GFPP into sesterbrasiliatriene. The polypeptide is Sesterbrasiliatriene synthase PbSS (PbSS) (Penicillium brasilianum).